We begin with the raw amino-acid sequence, 228 residues long: CD302 antigen (228 aa).

A signal peptide spans 1–20; sequence MPHAALSSLVLLSLATAIVA. The Extracellular segment spans residues 21–165; sequence DCPSSTWVQF…YDKKYLSDNH (145 aa). The region spanning 30-149 is the C-type lectin domain; sequence FQGSCYAFLQ…CEISSVEGTL (120 aa). Asparagine 107 carries an N-linked (GlcNAc...) asparagine glycan. Cysteines 125 and 140 form a disulfide. Residues 166 to 186 traverse the membrane as a helical segment; that stretch reads ILISTLVIASTVTLAVLGAII. At 187–228 the chain is on the cytoplasmic side; the sequence is WFLYRRNARSGFTSFSPAPLSPYSDGCALVVAEEDEYAVQLD.

The protein resides in the membrane. It is found in the cell projection. The protein localises to the filopodium. It localises to the cytoplasm. Its subcellular location is the cell cortex. The protein resides in the microvillus. In terms of biological role, potential multifunctional C-type lectin receptor that may play roles in endocytosis and phagocytosis as well as in cell adhesion and migration. The polypeptide is CD302 antigen (Cd302) (Mus musculus (Mouse)).